The chain runs to 535 residues: Bifunctional purine biosynthesis protein PurH (535 aa).

The 146-residue stretch at 6–151 (TRLPVRRALI…KNHKDVAIVV (146 aa)) folds into the MGS-like domain.

This sequence belongs to the PurH family.

It catalyses the reaction (6R)-10-formyltetrahydrofolate + 5-amino-1-(5-phospho-beta-D-ribosyl)imidazole-4-carboxamide = 5-formamido-1-(5-phospho-D-ribosyl)imidazole-4-carboxamide + (6S)-5,6,7,8-tetrahydrofolate. The enzyme catalyses IMP + H2O = 5-formamido-1-(5-phospho-D-ribosyl)imidazole-4-carboxamide. It functions in the pathway purine metabolism; IMP biosynthesis via de novo pathway; 5-formamido-1-(5-phospho-D-ribosyl)imidazole-4-carboxamide from 5-amino-1-(5-phospho-D-ribosyl)imidazole-4-carboxamide (10-formyl THF route): step 1/1. Its pathway is purine metabolism; IMP biosynthesis via de novo pathway; IMP from 5-formamido-1-(5-phospho-D-ribosyl)imidazole-4-carboxamide: step 1/1. In Pseudomonas putida (strain GB-1), this protein is Bifunctional purine biosynthesis protein PurH.